The following is a 221-amino-acid chain: Zingipain-1 (221 aa).

Cystine bridges form between cysteine 24–cysteine 65, cysteine 58–cysteine 98, and cysteine 155–cysteine 206. Cysteine 27 is an active-site residue. Residues asparagine 95 and asparagine 156 are each glycosylated (N-linked (GlcNAc...) asparagine). Active-site residues include histidine 161 and asparagine 181.

The protein belongs to the peptidase C1 family.

The catalysed reaction is Preferential cleavage of peptides with a proline residue at the P2 position.. Functionally, cysteine proteinase with a high level of diversity in substrate specificity, an amino acid bearing a proline residue at the P2 position is preferred. This is Zingipain-1 from Zingiber officinale (Ginger).